The following is a 542-amino-acid chain: Gamma-terpinene synthase 1 (542 aa).

Mn(2+) is bound by residues D295 and D299. The DDXXD motif motif lies at 295-299; that stretch reads DDVYD. Homodimerization stretches follow at residues 301–307 and 373–410; these read YDTLDEL and EAKW…FTLP. The Mn(2+) site is built by D439 and E447.

It belongs to the terpene synthase family. In terms of assembly, homodimer. Requires Mn(2+) as cofactor. The cofactor is Mg(2+). In terms of tissue distribution, mostly expressed in flowers and, to a lower extent, in leaves, especially in glandular trichomes.

The enzyme catalyses (2E)-geranyl diphosphate = gamma-terpinene + diphosphate. It carries out the reaction (2E)-geranyl diphosphate = alpha-terpinene + diphosphate. Its pathway is secondary metabolite biosynthesis; terpenoid biosynthesis. In terms of biological role, involved in the biosynthesis of phenolic monoterpenes natural products thymol and carvacrol which have a broad range of biological activities acting as antimicrobial compounds, insecticides, antioxidants and pharmaceutical agents. Monoterpene synthase which catalyzes the conversion of geranyl diphosphate (GPP) to gamma-terpinene and the minor products alpha-thujene, alpha-terpinene, myrcene, sabinene, (+)-R-limonene, alpha-pinene and alpha-phellandrene. The protein is Gamma-terpinene synthase 1 of Thymus vulgaris (Thyme).